The sequence spans 419 residues: MFNRIISLFLLLFTGQVIALDLELTQGINSALPIAINSFGSDAAAQEIGNVIENDLTISGQFKIISGPQGANSQSSVSTLRQLGADSVVTGRVNQVGNRIEVSFTLADAVANGNILLTKTFQINANQVRALAHHISDEVYQKLTGERGIFSTRIAYISVQRNGGRSRYSLEVADADGHNPQSLLVSSEPIMSPSWSPNGKSISYVSFEKKKAEIFTVSVETGQRRLITSFPGINGAPAWSPDGQHLAVVLSKSGTPKIYDVDLSSGSMKQLTFGNSIDTEPRYSPDGRSLLFTSGRGGSPQVYRLSLADGQISRVTFEGNYNARASYTPDMKHIVMLHREDRQFNIGVQNTGGGPISNLTFSGLDESPSVSPNSRLVLYATRYQNRGVLGIVSIDGRIRMRLPAREGDVQEPAWSPYLS.

The N-terminal stretch at 1–19 (MFNRIISLFLLLFTGQVIA) is a signal peptide.

The protein belongs to the TolB family. The Tol-Pal system is composed of five core proteins: the inner membrane proteins TolA, TolQ and TolR, the periplasmic protein TolB and the outer membrane protein Pal. They form a network linking the inner and outer membranes and the peptidoglycan layer.

It is found in the periplasm. In terms of biological role, part of the Tol-Pal system, which plays a role in outer membrane invagination during cell division and is important for maintaining outer membrane integrity. The chain is Tol-Pal system protein TolB from Legionella pneumophila (strain Corby).